A 428-amino-acid chain; its full sequence is C4-dicarboxylate transport protein (428 aa).

8 consecutive transmembrane segments (helical) span residues 8–28 (SLYF…HFYP), 44–64 (LIKM…IAGM), 76–96 (VALL…LIIV), 142–162 (IGAF…LFGF), 184–204 (VIFG…FGAM), 222–242 (LIIC…GSIA), 326–346 (IVHQ…AAGV), and 352–372 (IVLA…LALI).

This sequence belongs to the dicarboxylate/amino acid:cation symporter (DAACS) (TC 2.A.23) family.

The protein localises to the cell inner membrane. Functionally, responsible for the transport of dicarboxylates such as succinate, fumarate, and malate from the periplasm across the membrane. The protein is C4-dicarboxylate transport protein of Escherichia coli O139:H28 (strain E24377A / ETEC).